The primary structure comprises 118 residues: Large ribosomal subunit protein bL19 (118 aa).

This sequence belongs to the bacterial ribosomal protein bL19 family.

Its function is as follows. This protein is located at the 30S-50S ribosomal subunit interface and may play a role in the structure and function of the aminoacyl-tRNA binding site. The polypeptide is Large ribosomal subunit protein bL19 (Aliarcobacter butzleri (strain RM4018) (Arcobacter butzleri)).